Reading from the N-terminus, the 157-residue chain is Ribosomal RNA large subunit methyltransferase H (157 aa).

S-adenosyl-L-methionine is bound by residues leucine 73, glycine 105, and 124-129 (MSKMTF).

The protein belongs to the RNA methyltransferase RlmH family. As to quaternary structure, homodimer.

The protein localises to the cytoplasm. It catalyses the reaction pseudouridine(1915) in 23S rRNA + S-adenosyl-L-methionine = N(3)-methylpseudouridine(1915) in 23S rRNA + S-adenosyl-L-homocysteine + H(+). Its function is as follows. Specifically methylates the pseudouridine at position 1915 (m3Psi1915) in 23S rRNA. The chain is Ribosomal RNA large subunit methyltransferase H from Bacteroides thetaiotaomicron (strain ATCC 29148 / DSM 2079 / JCM 5827 / CCUG 10774 / NCTC 10582 / VPI-5482 / E50).